The following is a 739-amino-acid chain: Xylosyl- and glucuronyltransferase LARGE2s (739 aa).

Residues 1–10 are Cytoplasmic-facing; sequence MLCSWRVKLK. Residues 11–31 form a helical; Signal-anchor for type II membrane protein membrane-spanning segment; sequence LLLATITLAVLLSWLYLFVGS. Residues 32–739 lie on the Lumenal side of the membrane; it reads LEYGRFLLLP…LKYLTAERNL (708 aa). The segment at 80-105 is disordered; it reads AEGSDGNPQWAASAEDGPPLGGERNN. Residues N105, N131, and N217 are each glycosylated (N-linked (GlcNAc...) asparagine). The tract at residues 121 to 396 is xylosyltransferase activity; it reads LHVAIVCAGH…FLEYDGNLLR (276 aa). The Mn(2+) site is built by D225 and D227. N255 carries an N-linked (GlcNAc...) asparagine glycan. The interval 397-739 is glucuronyltransferase activity; that stretch reads RELFGCASLP…LKYLTAERNL (343 aa). Positions 546 and 548 each coordinate Mn(2+).

In the C-terminal section; belongs to the glycosyltransferase 49 family. It in the N-terminal section; belongs to the glycosyltransferase 8 family. It depends on Mn(2+) as a cofactor.

Its subcellular location is the golgi apparatus membrane. The enzyme catalyses 3-O-[beta-D-GlcA-(1-&gt;3)-beta-D-Xyl-(1-&gt;4)-Rib-ol-P-Rib-ol-P-3-beta-D-GalNAc-(1-&gt;3)-beta-D-GlcNAc-(1-&gt;4)-(O-6-P-alpha-D-Man)]-Thr-[protein] + UDP-alpha-D-xylose = 3-O-[alpha-D-Xyl-(1-&gt;3)-beta-D-GlcA-(1-&gt;4)-beta-D-Xyl-(1-&gt;4)-Rib-ol-P-Rib-ol-P-3-beta-D-GalNAc-(1-&gt;3)-beta-D-GlcNAc-(1-&gt;4)-(O-6-P-alpha-D-Man)]-Thr-[protein] + UDP + H(+). The catalysed reaction is 3-O-{(1-&gt;[3)-alpha-D-Xyl-(1-&gt;3)-beta-D-GlcA-(1-&gt;](n)-4)-beta-D-Xyl-(1-&gt;4)-Rib-ol-P-Rib-ol-P-3-beta-D-GalNAc-(1-&gt;3)-beta-D-GlcNAc-(1-&gt;4)-O-6-P-alpha-D-Man}-L-Thr-[protein] + UDP-alpha-D-glucuronate = 3-O-{beta-D-GlcA-(1-&gt;[3)-alpha-D-Xyl-(1-&gt;3)-beta-D-GlcA-(1-&gt;](n)-4)-beta-D-Xyl-(1-&gt;4)-Rib-ol-P-Rib-ol-P-3-beta-D-GalNAc-(1-&gt;3)-beta-D-GlcNAc-(1-&gt;4)-O-6-P-alpha-D-Man}-L-Thr-[protein] + UDP + H(+). It catalyses the reaction 3-O-{beta-D-GlcA-(1-&gt;[3)-alpha-D-Xyl-(1-&gt;3)-beta-D-GlcA-(1-&gt;](n)-4)-beta-D-Xyl-(1-&gt;4)-Rib-ol-P-Rib-ol-P-3-beta-D-GalNAc-(1-&gt;3)-beta-D-GlcNAc-(1-&gt;4)-O-6-P-alpha-D-Man}-L-Thr-[protein] + UDP-alpha-D-xylose = 3-O-{(1-&gt;[3)-alpha-D-Xyl-(1-&gt;3)-beta-D-GlcA-(1-&gt;](n+1)-4)-beta-D-Xyl-(1-&gt;4)-Rib-ol-P-Rib-ol-P-3-beta-D-GalNAc-(1-&gt;3)-beta-D-GlcNAc-(1-&gt;4)-O-6-P-alpha-D-Man}-L-Thr-[protein] + UDP + H(+). It participates in protein modification; protein glycosylation. Functionally, bifunctional glycosyltransferase with both alpha-1,3-xylosyltransferase and beta-1,3-glucuronyltransferase activities involved in the maturation of alpha-dystroglycan (DAG1) by glycosylation leading to DAG1 binding to laminin G-like domain-containing extracellular proteins with high affinity and in a phosphorylated-O-mannosyl trisaccharide dependent manner. Elongates the glucuronyl-beta-1,4-xylose-beta disaccharide primer structure by adding repeating units [-3-Xylose-alpha-1,3-GlcA-beta-1-] to produce a heteropolysaccharide. Supports the maturation of DAG1 more effectively than LARGE1. In addition, can modify both heparan sulfate (HS)- and chondroitin/dermatan sulfate (CS/DS)-proteoglycans (PGs), namely GPC4, with a glycosaminoglycan (GAG)-like polysaccharide composed of xylose and glucuronic acid to confer laminin binding. This is Xylosyl- and glucuronyltransferase LARGE2s from Gallus gallus (Chicken).